A 686-amino-acid polypeptide reads, in one-letter code: Eomesodermin homolog (686 aa).

The interval 27–46 (GGSGGSAGHLPSAAPSPQKL) is disordered. Low complexity predominate over residues 34 to 43 (GHLPSAAPSP). Ser107 is modified (phosphoserine). The T-box DNA-binding region spans 276–456 (LWLKFHRHQT…HNPFAKGFRD (181 aa)). The required for transcription activation stretch occupies residues 571-686 (AMAGWGGRGS…GGYYAFYTTP (116 aa)). The tract at residues 639-686 (ACKRRRLSPSNSSNENSPSIKCEDINAEEYSKDTSKGMGGYYAFYTTP) is disordered. The segment covering 646-657 (SPSNSSNENSPS) has biased composition (low complexity). Positions 659-673 (KCEDINAEEYSKDTS) are enriched in basic and acidic residues.

As to expression, expressed in CD8+ T-cells.

Its subcellular location is the nucleus. Functions as a transcriptional activator playing a crucial role during development. Functions in trophoblast differentiation and later in gastrulation, regulating both mesoderm delamination and endoderm specification. Plays a role in brain development being required for the specification and the proliferation of the intermediate progenitor cells and their progeny in the cerebral cortex. Required for differentiation and migration of unipolar dendritic brush cells. Also involved in the differentiation of CD8+ T-cells during immune response regulating the expression of lytic effector genes. The polypeptide is Eomesodermin homolog (EOMES) (Homo sapiens (Human)).